We begin with the raw amino-acid sequence, 282 residues long: 4-diphosphocytidyl-2-C-methyl-D-erythritol kinase (282 aa).

Lys12 is a catalytic residue. 95–105 (PMGGGIGGGSS) is an ATP binding site. Asp137 is a catalytic residue.

This sequence belongs to the GHMP kinase family. IspE subfamily.

It catalyses the reaction 4-CDP-2-C-methyl-D-erythritol + ATP = 4-CDP-2-C-methyl-D-erythritol 2-phosphate + ADP + H(+). The protein operates within isoprenoid biosynthesis; isopentenyl diphosphate biosynthesis via DXP pathway; isopentenyl diphosphate from 1-deoxy-D-xylulose 5-phosphate: step 3/6. In terms of biological role, catalyzes the phosphorylation of the position 2 hydroxy group of 4-diphosphocytidyl-2C-methyl-D-erythritol. This is 4-diphosphocytidyl-2-C-methyl-D-erythritol kinase from Pseudomonas paraeruginosa (strain DSM 24068 / PA7) (Pseudomonas aeruginosa (strain PA7)).